The sequence spans 254 residues: 5'-nucleotidase SurE (254 aa).

A divalent metal cation contacts are provided by D8, D9, S39, and N91.

The protein belongs to the SurE nucleotidase family. A divalent metal cation is required as a cofactor.

The protein localises to the cytoplasm. It carries out the reaction a ribonucleoside 5'-phosphate + H2O = a ribonucleoside + phosphate. Its function is as follows. Nucleotidase that shows phosphatase activity on nucleoside 5'-monophosphates. The polypeptide is 5'-nucleotidase SurE (Pseudoalteromonas translucida (strain TAC 125)).